Here is a 307-residue protein sequence, read N- to C-terminus: Porphobilinogen deaminase (307 aa).

Cysteine 241 is modified (S-(dipyrrolylmethanemethyl)cysteine).

This sequence belongs to the HMBS family. In terms of assembly, monomer. Dipyrromethane is required as a cofactor.

It carries out the reaction 4 porphobilinogen + H2O = hydroxymethylbilane + 4 NH4(+). Its pathway is porphyrin-containing compound metabolism; protoporphyrin-IX biosynthesis; coproporphyrinogen-III from 5-aminolevulinate: step 2/4. In terms of biological role, tetrapolymerization of the monopyrrole PBG into the hydroxymethylbilane pre-uroporphyrinogen in several discrete steps. This is Porphobilinogen deaminase from Coxiella burnetii (strain CbuK_Q154) (Coxiella burnetii (strain Q154)).